Reading from the N-terminus, the 102-residue chain is Large ribosomal subunit protein bL21 (102 aa).

The protein belongs to the bacterial ribosomal protein bL21 family. As to quaternary structure, part of the 50S ribosomal subunit. Contacts protein L20.

Its function is as follows. This protein binds to 23S rRNA in the presence of protein L20. This Geotalea daltonii (strain DSM 22248 / JCM 15807 / FRC-32) (Geobacter daltonii) protein is Large ribosomal subunit protein bL21.